Consider the following 162-residue polypeptide: Onchocystatin (162 aa).

A signal peptide spans 1–32 (MLTIKDGTLLIHLLLFSVVALVQLQGAKSARA). The disordered stretch occupies residues 30–54 (ARAKNPSKMESKTGENQDRPVLLGG). Residues 36–47 (SKMESKTGENQD) are compositionally biased toward basic and acidic residues. A Secondary area of contact motif is present at residues 97 to 101 (QVVAG). Cys-115 and Cys-128 form a disulfide bridge.

The protein belongs to the cystatin family. In terms of tissue distribution, expressed in the cuticle of L3 and L4 larvae, female adult, and in the eggshell of developing microfilariae.

Cysteine protease inhibitor which inhibits members of the peptidase C1 family. In the human host, inhibits CTSL/cathepsin L and CTSS/cathepsin S and to a lesser extent CTSB/cathepsin B which may cause defects in antigen processing and thereby impair antigen-driven T cell proliferation. This Onchocerca volvulus protein is Onchocystatin.